Here is a 91-residue protein sequence, read N- to C-terminus: Small ribosomal subunit protein bS18 (91 aa).

The interval 1–21 (MSDERAPQRSTGPRKKRPFQR) is disordered. Over residues 12–21 (GPRKKRPFQR) the composition is skewed to basic residues.

Belongs to the bacterial ribosomal protein bS18 family. As to quaternary structure, part of the 30S ribosomal subunit. Forms a tight heterodimer with protein bS6.

Functionally, binds as a heterodimer with protein bS6 to the central domain of the 16S rRNA, where it helps stabilize the platform of the 30S subunit. This Geotalea daltonii (strain DSM 22248 / JCM 15807 / FRC-32) (Geobacter daltonii) protein is Small ribosomal subunit protein bS18.